We begin with the raw amino-acid sequence, 105 residues long: Small ribosomal subunit protein uS10c (105 aa).

Belongs to the universal ribosomal protein uS10 family. As to quaternary structure, part of the 30S ribosomal subunit.

It is found in the plastid. Its subcellular location is the chloroplast. In terms of biological role, involved in the binding of tRNA to the ribosomes. The protein is Small ribosomal subunit protein uS10c of Gracilaria tenuistipitata var. liui (Red alga).